We begin with the raw amino-acid sequence, 255 residues long: Phosphoribosylaminoimidazole-succinocarboxamide synthase A (255 aa).

This sequence belongs to the SAICAR synthetase family.

The enzyme catalyses 5-amino-1-(5-phospho-D-ribosyl)imidazole-4-carboxylate + L-aspartate + ATP = (2S)-2-[5-amino-1-(5-phospho-beta-D-ribosyl)imidazole-4-carboxamido]succinate + ADP + phosphate + 2 H(+). It participates in purine metabolism; IMP biosynthesis via de novo pathway; 5-amino-1-(5-phospho-D-ribosyl)imidazole-4-carboxamide from 5-amino-1-(5-phospho-D-ribosyl)imidazole-4-carboxylate: step 1/2. The protein is Phosphoribosylaminoimidazole-succinocarboxamide synthase A (purC1) of Bradyrhizobium diazoefficiens (strain JCM 10833 / BCRC 13528 / IAM 13628 / NBRC 14792 / USDA 110).